The sequence spans 488 residues: GTPase Der (488 aa).

2 consecutive EngA-type G domains span residues 3-166 (PVVA…AEAM) and 199-372 (IKLA…DSAT). GTP contacts are provided by residues 9–16 (GRPNVGKS), 56–60 (DTGGI), 118–121 (NKVD), 205–212 (GKPNVGKS), 252–256 (DTAGV), and 317–320 (NKWD). A KH-like domain is found at 373 to 457 (RRVSTSMLTR…PIQLRFQEGD (85 aa)). The interval 460 to 488 (FENKTEKLTMSQERRRKRAQSHIKDRKTK) is disordered. Over residues 473–488 (RRRKRAQSHIKDRKTK) the composition is skewed to basic residues.

Belongs to the TRAFAC class TrmE-Era-EngA-EngB-Septin-like GTPase superfamily. EngA (Der) GTPase family. Associates with the 50S ribosomal subunit.

Its function is as follows. GTPase that plays an essential role in the late steps of ribosome biogenesis. The sequence is that of GTPase Der from Shewanella baltica (strain OS223).